Consider the following 200-residue polypeptide: Claudin-11 (200 aa).

A topological domain (cytoplasmic) is located at residue methionine 1. Residues 2-22 traverse the membrane as a helical segment; sequence VATCLQVVGFVTSFVGWIGVI. Over 23–75 the chain is Extracellular; that stretch reads VTTSTNDWVVTCGYTIPTCRKLDELGSKGLWADCVMATGLYHCKPLVDILPCR. Residues 76–96 traverse the membrane as a helical segment; that stretch reads ALMIAASVLGLPAILLLLTVL. Residues 97-115 lie on the Cytoplasmic side of the membrane; that stretch reads PCIRMGQEPGVAKYRRAQL. The helical transmembrane segment at 116-136 threads the bilayer; the sequence is AGVLLILLALCAIVATIWFPV. At 137–150 the chain is on the extracellular side; it reads CAHRETTIVSFGYS. A helical membrane pass occupies residues 151 to 171; that stretch reads LYAGWIGAVLCLVGGCVILCC. Residues 172 to 200 are Cytoplasmic-facing; it reads AGDAQAFGENRFYYTAGSSSPTHAKSAHV. Phosphoserine occurs at positions 190 and 191.

Belongs to the claudin family. In terms of assembly, interacts with tetraspanin-3/TSPAN3. Interacts with OCLN.

It is found in the cell junction. The protein localises to the tight junction. The protein resides in the cell membrane. Its function is as follows. Plays a major role in tight junction-specific obliteration of the intercellular space, through calcium-independent cell-adhesion activity. In Pongo abelii (Sumatran orangutan), this protein is Claudin-11 (CLDN11).